The following is a 160-amino-acid chain: Major pollen allergen Bet v 1-G (160 aa).

K55, Y82, Y84, and N101 together coordinate brassinolide.

Belongs to the BetVI family.

The protein localises to the cytoplasm. Its function is as follows. May be a general steroid carrier protein. The chain is Major pollen allergen Bet v 1-G (BETV1G) from Betula pendula (European white birch).